Reading from the N-terminus, the 117-residue chain is Protein RALF-like 27 (117 aa).

The first 27 residues, 1–27 (MTKTFFSFSFFFTSSLLLLLAATSATA), serve as a signal peptide directing secretion. Residues 28 to 71 (STGNVTSGLRYDGCAPGDTVGECITATVEEEDEEGVEAVVRRIL) constitute a propeptide, removed in mature form. Residue N31 is glycosylated (N-linked (GlcNAc...) asparagine). 2 disulfide bridges follow: C88–C96 and C107–C113.

Belongs to the plant rapid alkalinization factor (RALF) family.

It localises to the secreted. Its function is as follows. Cell signaling peptide that may regulate plant stress, growth, and development. Mediates a rapid alkalinization of extracellular space by mediating a transient increase in the cytoplasmic Ca(2+) concentration leading to a calcium-dependent signaling events through a cell surface receptor and a concomitant activation of some intracellular mitogen-activated protein kinases. The sequence is that of Protein RALF-like 27 (RALFL27) from Arabidopsis thaliana (Mouse-ear cress).